The primary structure comprises 564 residues: Glutamate--tRNA ligase (564 aa).

Positions 107–117 (PNPNGPPTLGS) match the 'HIGH' region motif.

It belongs to the class-I aminoacyl-tRNA synthetase family. Glutamate--tRNA ligase type 2 subfamily.

Its subcellular location is the cytoplasm. It catalyses the reaction tRNA(Glu) + L-glutamate + ATP = L-glutamyl-tRNA(Glu) + AMP + diphosphate. In terms of biological role, catalyzes the attachment of glutamate to tRNA(Glu) in a two-step reaction: glutamate is first activated by ATP to form Glu-AMP and then transferred to the acceptor end of tRNA(Glu). The chain is Glutamate--tRNA ligase from Methanothrix thermoacetophila (strain DSM 6194 / JCM 14653 / NBRC 101360 / PT) (Methanosaeta thermophila).